The following is a 109-amino-acid chain: Cell division protein ZapA (109 aa).

The stretch at 21 to 99 (PEQLDALNQA…IEQALLEQGR (79 aa)) forms a coiled coil.

Belongs to the ZapA family. Type 1 subfamily. In terms of assembly, homodimer. Interacts with FtsZ.

Its subcellular location is the cytoplasm. In terms of biological role, activator of cell division through the inhibition of FtsZ GTPase activity, therefore promoting FtsZ assembly into bundles of protofilaments necessary for the formation of the division Z ring. It is recruited early at mid-cell but it is not essential for cell division. This chain is Cell division protein ZapA, found in Edwardsiella ictaluri (strain 93-146).